A 331-amino-acid chain; its full sequence is MKKPVVIGLAIAAIVAVIAGGTWWYQSRQDDGLTLYGNVDIRTVNISFRVGGRLASLNVDEGDTIKAGQVLGELDHAPYENALMQAKAGVSVAQAQYDLMLAGYRDEEIAQAAAAVRQAQAAYDYAQNFYNRQQGLWKSRTISANDLENARSSRDQAQATLKSAQDKLSQYRTGNREQDIAQAKASLEQAKAQLAQAQLDLQDTTLIAPANGTLLTRAVEPGSMLSAGSTVLTLSLTRPVWVRAYVDERNLSQTQPGRDILLYTDGRPDKPYHGKIGFVSPTAEFTPKTVETPDLRTDLVYRLRIIVTDADDALRQGMPVTVKFNYEARHE.

Residues M1 to A19 form the signal peptide. Residues E107–A208 are a coiled coil.

It belongs to the UPF0194 family.

The protein resides in the periplasm. This chain is UPF0194 membrane protein YbhG, found in Salmonella gallinarum (strain 287/91 / NCTC 13346).